The sequence spans 450 residues: Putative receptor-like protein kinase At1g72540 (450 aa).

Threonine 73 is modified (phosphothreonine). The Protein kinase domain occupies 84–365; the sequence is FSKYNFLGEG…TVVKTLEPIL (282 aa). Residues 90–98 and lysine 119 each bind ATP; that span reads LGEGGFGEV. Residue tyrosine 164 is modified to Phosphotyrosine. Catalysis depends on aspartate 214, which acts as the Proton acceptor. Serine 218 carries the post-translational modification Phosphoserine. Position 254 is a phosphothreonine (threonine 254). Tyrosine 262 is subject to Phosphotyrosine.

The protein belongs to the protein kinase superfamily. Ser/Thr protein kinase family.

The catalysed reaction is L-seryl-[protein] + ATP = O-phospho-L-seryl-[protein] + ADP + H(+). It carries out the reaction L-threonyl-[protein] + ATP = O-phospho-L-threonyl-[protein] + ADP + H(+). The chain is Putative receptor-like protein kinase At1g72540 from Arabidopsis thaliana (Mouse-ear cress).